A 382-amino-acid chain; its full sequence is Gap junction alpha-1 protein (382 aa).

The Cytoplasmic portion of the chain corresponds to 2–23 (GDWSALGKLLDKVQAYSTAGGK). S5 is modified (phosphoserine). A helical transmembrane segment spans residues 24–44 (VWLSVLFIFRILLLGTAVESA). The Extracellular portion of the chain corresponds to 45–76 (WGDEQSAFRCNTQQPGCENVCYDKSFPISHVR). 2 disulfides stabilise this stretch: C54–C192 and C187–C198. Residues 77–97 (FWVLQIIFVSVPTLLYLAHVF) form a helical membrane-spanning segment. Residues 98-155 (YVMRKEEKLNKKEEELKVAQTDGVNVEMHLKQIEIKKFKYGIEEHGKVKMRGGLLRTY) lie on the Cytoplasmic side of the membrane. K144 is covalently cross-linked (Glycyl lysine isopeptide (Lys-Gly) (interchain with G-Cter in SUMO)). Residues 156–176 (IISILFKSVFEVAFLLIQWYI) form a helical membrane-spanning segment. Topologically, residues 177–207 (YGFSLSAVYTCKRDPCPHQVDCFLSRPTEKT) are extracellular. A helical transmembrane segment spans residues 208 to 228 (IFIIFMLVVSLVSLALNIIEL). Over 229–382 (FYVFFKGVKD…SRPRPDDLEI (154 aa)) the chain is Cytoplasmic. K237 is covalently cross-linked (Glycyl lysine isopeptide (Lys-Gly) (interchain with G-Cter in SUMO)). Residues 244–382 (SDPYHATTGP…SRPRPDDLEI (139 aa)) form an interaction with NOV region. A Phosphotyrosine modification is found at Y247. A phosphoserine mark is found at S255, S257, and S262. The interval 264–382 (KYAYFNGCSS…SRPRPDDLEI (119 aa)) is interaction with UBQLN4. C271 bears the S-nitrosocysteine mark. At T275 the chain carries Phosphothreonine. S306 and S314 each carry phosphoserine. Positions 317-332 (QNRMGQAGSTISNSHA) are enriched in polar residues. The interval 317-382 (QNRMGQAGST…SRPRPDDLEI (66 aa)) is disordered. The residue at position 325 (S325) is a Phosphoserine; by CK1. The residue at position 326 (T326) is a Phosphothreonine. Residues S328 and S330 each carry the phosphoserine; by CK1 modification. Phosphoserine is present on residues S344 and S365. Low complexity predominate over residues 362 to 374 (RPSSRASSRASSR). A Phosphoserine; by PKC/PRKCG and PKC/PRKCD modification is found at S368. 2 positions are modified to phosphoserine: S369 and S373.

It belongs to the connexin family. Alpha-type (group II) subfamily. In terms of assembly, a connexon is composed of a hexamer of connexins. Interacts with SGSM3. Interacts with RIC1/CIP150. Interacts with CNST and CSNK1D. Interacts (via C-terminus) with TJP1. Interacts (via C-terminus) with SRC (via SH3 domain). Interacts (not ubiquitinated) with UBQLN4 (via UBA domain). Interacts with NOV. Interacts with TMEM65. Interacts with ANK3/ANKG and PKP2. In terms of processing, phosphorylation at Ser-325, Ser-328 and Ser-330 by CK1 modulates gap junction assembly. Phosphorylated at Ser-368 by PRKCG; phosphorylation induces disassembly of gap junction plaques and inhibition of gap junction activity. Phosphorylation at Ser-368 by PRKCD triggers its internalization into small vesicles leading to proteasome-mediated degradation. Sumoylated with SUMO1, SUMO2 and SUMO3, which may regulate the level of functional Cx43 gap junctions at the plasma membrane. May be desumoylated by SENP1 or SENP2. Post-translationally, S-nitrosylation at Cys-271 is enriched at the muscle endothelial gap junction in arteries, it augments channel permeability and may regulate of smooth muscle cell to endothelial cell communication. In terms of processing, acetylated in the developing cortex; leading to delocalization from the cell membrane.

It is found in the cell membrane. Its subcellular location is the cell junction. The protein localises to the gap junction. It localises to the endoplasmic reticulum. In terms of biological role, gap junction protein that acts as a regulator of bladder capacity. A gap junction consists of a cluster of closely packed pairs of transmembrane channels, the connexons, through which materials of low MW diffuse from one cell to a neighboring cell. May play a critical role in the physiology of hearing by participating in the recycling of potassium to the cochlear endolymph. Negative regulator of bladder functional capacity: acts by enhancing intercellular electrical and chemical transmission, thus sensitizing bladder muscles to cholinergic neural stimuli and causing them to contract. May play a role in cell growth inhibition through the regulation of NOV expression and localization. Plays an essential role in gap junction communication in the ventricles. The polypeptide is Gap junction alpha-1 protein (GJA1) (Ursus americanus (American black bear)).